Consider the following 189-residue polypeptide: Protein GrpE (189 aa).

Basic and acidic residues predominate over residues Met1–Thr14. The segment at Met1–Ala23 is disordered.

The protein belongs to the GrpE family. Homodimer.

The protein resides in the cytoplasm. Its function is as follows. Participates actively in the response to hyperosmotic and heat shock by preventing the aggregation of stress-denatured proteins, in association with DnaK and GrpE. It is the nucleotide exchange factor for DnaK and may function as a thermosensor. Unfolded proteins bind initially to DnaJ; upon interaction with the DnaJ-bound protein, DnaK hydrolyzes its bound ATP, resulting in the formation of a stable complex. GrpE releases ADP from DnaK; ATP binding to DnaK triggers the release of the substrate protein, thus completing the reaction cycle. Several rounds of ATP-dependent interactions between DnaJ, DnaK and GrpE are required for fully efficient folding. The polypeptide is Protein GrpE (Lawsonia intracellularis (strain PHE/MN1-00)).